Here is a 317-residue protein sequence, read N- to C-terminus: Uridine phosphorylase 2 (317 aa).

Phosphate-binding positions include glycine 66, arginine 100, and 144–147 (RIGT). Cysteine 95 and cysteine 102 are disulfide-bonded. Uridine contacts are provided by residues 148 to 149 (SG) and 223 to 225 (QGR).

It belongs to the PNP/UDP phosphorylase family. Homodimer. Predominantly expressed in kidney.

It carries out the reaction uridine + phosphate = alpha-D-ribose 1-phosphate + uracil. It catalyses the reaction 2'-deoxyuridine + phosphate = 2-deoxy-alpha-D-ribose 1-phosphate + uracil. The protein operates within pyrimidine metabolism; UMP biosynthesis via salvage pathway; uracil from uridine (phosphorylase route): step 1/1. A conditional disulfide bridge can form within the protein that dislocates a critical phosphate-coordinating arginine Arg-100 away from the active site, disabling the enzyme. Functionally, catalyzes the reversible phosphorylytic cleavage of uridine to uracil and ribose-1-phosphate which can then be utilized as carbon and energy sources or in the rescue of pyrimidine bases for nucleotide synthesis. Shows broad substrate specificity and can also accept deoxyuridine and other analogous compounds. This is Uridine phosphorylase 2 from Homo sapiens (Human).